Consider the following 500-residue polypeptide: Probable cytosol aminopeptidase (500 aa).

Mn(2+) is bound by residues Lys-262 and Asp-267. Lys-274 is a catalytic residue. 3 residues coordinate Mn(2+): Asp-285, Asp-344, and Glu-346. Arg-348 is an active-site residue.

It belongs to the peptidase M17 family. Mn(2+) is required as a cofactor.

It localises to the cytoplasm. It catalyses the reaction Release of an N-terminal amino acid, Xaa-|-Yaa-, in which Xaa is preferably Leu, but may be other amino acids including Pro although not Arg or Lys, and Yaa may be Pro. Amino acid amides and methyl esters are also readily hydrolyzed, but rates on arylamides are exceedingly low.. The catalysed reaction is Release of an N-terminal amino acid, preferentially leucine, but not glutamic or aspartic acids.. Functionally, presumably involved in the processing and regular turnover of intracellular proteins. Catalyzes the removal of unsubstituted N-terminal amino acids from various peptides. In Ehrlichia ruminantium (strain Welgevonden), this protein is Probable cytosol aminopeptidase.